Consider the following 608-residue polypeptide: Epsin-3 (608 aa).

A 1,2-diacyl-sn-glycero-3-phospho-(1D-myo-inositol-4,5-bisphosphate) contacts are provided by Arg8, Lys11, Arg25, Asn30, Arg63, and His73. Residues 12–144 (NIVHNYSEAE…KDEERLRQER (133 aa)) enclose the ENTH domain. Disordered regions lie at residues 150–266 (TKER…QSSI) and 281–475 (STHC…GPSA). Positions 174–189 (GSPSSYTSASSSPRYA) are enriched in low complexity. Phosphoserine is present on residues Ser184 and Ser185. A UIM domain is found at 202-221 (EEELQLQLALAMSREEAEKG). Basic and acidic residues-rich tracts occupy residues 214-229 (SREE…KGDD) and 240-260 (GQRR…EKLK). Tandem repeats lie at residues 287–289 (DPW), 310–312 (DPW), 337–339 (EPW), 353–355 (DPW), 370–372 (DPW), 495–497 (NPF), and 508–510 (NPF). Residues 287 to 372 (DPWDIPGLRP…KLPSTGVDPW (86 aa)) are 5 X 3 AA repeats of [DE]-P-W. Residues 346–363 (PSGPPITDPWAPSSPTPK) show a composition bias toward pro residues. The tract at residues 495–607 (NPFLTGLSAP…LPPQAGTNPF (113 aa)) is 3 X 3 AA repeats of N-P-F. Disordered regions lie at residues 498–530 (LTGL…SPAL) and 575–608 (GAFA…NPFL). The segment covering 578–588 (APPPASLPQPL) has biased composition (pro residues). The stretch at 605–607 (NPF) is repeat 3.

This sequence belongs to the epsin family.

The protein resides in the cytoplasm. It localises to the cell cortex. The protein localises to the perinuclear region. It is found in the cytoplasmic vesicle. Its subcellular location is the clathrin-coated vesicle. The protein resides in the nucleus. In Rattus norvegicus (Rat), this protein is Epsin-3 (Epn3).